A 265-amino-acid chain; its full sequence is Tryptophan synthase alpha chain (265 aa).

Residues Glu-49 and Asp-60 each act as proton acceptor in the active site.

Belongs to the TrpA family. In terms of assembly, tetramer of two alpha and two beta chains.

The catalysed reaction is (1S,2R)-1-C-(indol-3-yl)glycerol 3-phosphate + L-serine = D-glyceraldehyde 3-phosphate + L-tryptophan + H2O. Its pathway is amino-acid biosynthesis; L-tryptophan biosynthesis; L-tryptophan from chorismate: step 5/5. The alpha subunit is responsible for the aldol cleavage of indoleglycerol phosphate to indole and glyceraldehyde 3-phosphate. The polypeptide is Tryptophan synthase alpha chain (Polynucleobacter asymbioticus (strain DSM 18221 / CIP 109841 / QLW-P1DMWA-1) (Polynucleobacter necessarius subsp. asymbioticus)).